We begin with the raw amino-acid sequence, 257 residues long: Probable enoyl-CoA hydratase (257 aa).

This sequence belongs to the enoyl-CoA hydratase/isomerase family.

The enzyme catalyses a (3S)-3-hydroxyacyl-CoA = a (2E)-enoyl-CoA + H2O. The catalysed reaction is a 4-saturated-(3S)-3-hydroxyacyl-CoA = a (3E)-enoyl-CoA + H2O. In terms of biological role, could possibly oxidize fatty acids using specific components. The chain is Probable enoyl-CoA hydratase (fadB1) from Rhizobium meliloti (strain 1021) (Ensifer meliloti).